A 685-amino-acid chain; its full sequence is RING finger protein 145 (685 aa).

A run of 13 helical transmembrane segments spans residues 53–73, 77–97, 123–143, 151–171, 174–194, 225–245, 275–295, 316–336, 340–360, 384–404, 410–430, 460–480, and 482–502; these read YIAL…LTLP, LVQL…HQLS, FTTA…VMQT, AHLL…IVFI, FAMI…LLVP, LVLP…QIYT, YSLL…LTLC, TEGI…LQVI, FLLS…MLEI, SLCL…CQFF, LLII…TLLI, LLEF…TLFG, and WTVM…WLRA. Residues 537–575 form an RING-type; atypical zinc finger; sequence CSICFQDMKSAVITPCSHFFHAACLKKWLYVQETCPLCH. A disordered region spans residues 582 to 685; that stretch reads LQPTSSPGTP…VSTSDVNCAS (104 aa). A compositionally biased stretch (low complexity) spans 583–602; it reads QPTSSPGTPTQGTPAANQNP. The segment covering 620 to 631 has biased composition (basic and acidic residues); the sequence is EGIRAEEMKTSA.

It localises to the membrane. The chain is RING finger protein 145 (rnf145) from Danio rerio (Zebrafish).